A 194-amino-acid chain; its full sequence is Peptidyl-tRNA hydrolase (194 aa).

Residue Tyr17 coordinates tRNA. His22 acts as the Proton acceptor in catalysis. TRNA-binding residues include Phe68, Asn70, and Asn116.

It belongs to the PTH family. Monomer.

The protein localises to the cytoplasm. The enzyme catalyses an N-acyl-L-alpha-aminoacyl-tRNA + H2O = an N-acyl-L-amino acid + a tRNA + H(+). In terms of biological role, hydrolyzes ribosome-free peptidyl-tRNAs (with 1 or more amino acids incorporated), which drop off the ribosome during protein synthesis, or as a result of ribosome stalling. Catalyzes the release of premature peptidyl moieties from peptidyl-tRNA molecules trapped in stalled 50S ribosomal subunits, and thus maintains levels of free tRNAs and 50S ribosomes. The protein is Peptidyl-tRNA hydrolase of Mannheimia succiniciproducens (strain KCTC 0769BP / MBEL55E).